The following is a 368-amino-acid chain: Chorismate synthase (368 aa).

NADP(+) is bound by residues arginine 48 and arginine 54. Residues 131 to 133 (RSS), 243 to 244 (NA), glycine 292, 307 to 311 (KPTSS), and arginine 333 each bind FMN.

This sequence belongs to the chorismate synthase family. In terms of assembly, homotetramer. Requires FMNH2 as cofactor.

It catalyses the reaction 5-O-(1-carboxyvinyl)-3-phosphoshikimate = chorismate + phosphate. Its pathway is metabolic intermediate biosynthesis; chorismate biosynthesis; chorismate from D-erythrose 4-phosphate and phosphoenolpyruvate: step 7/7. Functionally, catalyzes the anti-1,4-elimination of the C-3 phosphate and the C-6 proR hydrogen from 5-enolpyruvylshikimate-3-phosphate (EPSP) to yield chorismate, which is the branch point compound that serves as the starting substrate for the three terminal pathways of aromatic amino acid biosynthesis. This reaction introduces a second double bond into the aromatic ring system. In Nitrobacter winogradskyi (strain ATCC 25391 / DSM 10237 / CIP 104748 / NCIMB 11846 / Nb-255), this protein is Chorismate synthase.